The chain runs to 27 residues: MFFKWISKFIRRLSKCGIKSITSKAYK.

It localises to the plastid. The protein localises to the chloroplast. This is an uncharacterized protein from Marchantia polymorpha (Common liverwort).